The sequence spans 232 residues: Ubiquinone biosynthesis O-methyltransferase (232 aa).

The S-adenosyl-L-methionine site is built by Arg-36, Gly-55, Asp-76, and Met-120.

This sequence belongs to the methyltransferase superfamily. UbiG/COQ3 family.

The enzyme catalyses a 3-demethylubiquinol + S-adenosyl-L-methionine = a ubiquinol + S-adenosyl-L-homocysteine + H(+). It carries out the reaction a 3-(all-trans-polyprenyl)benzene-1,2-diol + S-adenosyl-L-methionine = a 2-methoxy-6-(all-trans-polyprenyl)phenol + S-adenosyl-L-homocysteine + H(+). The protein operates within cofactor biosynthesis; ubiquinone biosynthesis. O-methyltransferase that catalyzes the 2 O-methylation steps in the ubiquinone biosynthetic pathway. This Burkholderia cenocepacia (strain ATCC BAA-245 / DSM 16553 / LMG 16656 / NCTC 13227 / J2315 / CF5610) (Burkholderia cepacia (strain J2315)) protein is Ubiquinone biosynthesis O-methyltransferase.